The primary structure comprises 209 residues: Ribosomal RNA small subunit methyltransferase G (209 aa).

Residues glycine 75, leucine 80, 126–127, and arginine 141 contribute to the S-adenosyl-L-methionine site; that span reads VE.

Belongs to the methyltransferase superfamily. RNA methyltransferase RsmG family.

It is found in the cytoplasm. It carries out the reaction guanosine(527) in 16S rRNA + S-adenosyl-L-methionine = N(7)-methylguanosine(527) in 16S rRNA + S-adenosyl-L-homocysteine. Specifically methylates the N7 position of guanine in position 527 of 16S rRNA. The polypeptide is Ribosomal RNA small subunit methyltransferase G (Colwellia psychrerythraea (strain 34H / ATCC BAA-681) (Vibrio psychroerythus)).